We begin with the raw amino-acid sequence, 1341 residues long: WD repeat-containing protein 19 (1341 aa).

WD repeat units follow at residues 11-51 (SWLG…RSEI), 52-92 (SLPG…TSQL), 95-134 (GMRD…KIPV), 137-175 (KHTK…IRQT), 273-311 (DHKD…DMYA), and 317-356 (DENK…LGDA). 6 TPR repeats span residues 736 to 769 (AQDL…AKRL), 775 to 808 (PFIS…DNKE), 840 to 873 (RVLK…DRAA), 895 to 928 (PKIH…NSVI), 951 to 984 (LDGA…NEAF), and 1020 to 1053 (EKRH…EDNV).

In terms of assembly, component of the IFT complex A (IFT-A) complex. IFT-A complex is divided into a core subcomplex composed of IFT122:IFT140:WDR19 which is associated with TULP3 and a peripheral subcomplex composed of IFT43:WDR35:TTC21B. Interacts (via C-terminal region) with IFT122 (via C-terminal region). Interacts with BBS1. Interacts with TTC25. As to expression, tissue-specific expression of isoforms. Expressed in the prostate, testis, epididymis, submaxillary and salivary glands. Expressed in ependymal cells lining brain ventricles (at protein level).

It is found in the cell projection. The protein localises to the cilium. The protein resides in the cytoplasm. Its subcellular location is the cytoskeleton. It localises to the cilium basal body. It is found in the photoreceptor outer segment. The protein localises to the flagellum. Its function is as follows. As component of the IFT complex A (IFT-A), a complex required for retrograde ciliary transport and entry into cilia of G protein-coupled receptors (GPCRs), it is involved in cilia function and/or assembly. Essential for functional IFT-A assembly and ciliary entry of GPCRs. Associates with the BBSome complex to mediate ciliary transport. This chain is WD repeat-containing protein 19, found in Mus musculus (Mouse).